Here is a 785-residue protein sequence, read N- to C-terminus: Arrestin domain-containing protein D (785 aa).

5 disordered regions span residues 29–69 (QNES…SKYP), 172–205 (ILLP…TTTT), 326–367 (SNNS…ITNN), 435–486 (SNSN…SDHN), and 608–642 (YSSS…LDEQ). The span at 173–205 (LLPTTTSTQNSTLSPTLLSSNLNSKSSTTTTTT) shows a compositional bias: low complexity. The segment covering 435-450 (SNSNSSSSGGSSNKNN) has biased composition (low complexity). Positions 466 to 478 (SNKKSSGSHRYHY) are enriched in basic residues. Residues 608–633 (YSSSGSGSGSGSSNSNSNHSSSNYLN) show a composition bias toward low complexity. The segment at 682-742 (ESSITNCNLC…ICLMCFDAVK (61 aa)) adopts an FYVE-type zinc-finger fold. Zn(2+) contacts are provided by Cys688, Cys691, Cys704, Cys707, Cys712, Cys715, Cys734, and Cys737. An RING-type; degenerate zinc finger spans residues 688 to 738 (CNLCDNTFTIIRRTHHCRACGGVFCEACSNQKVCLYGFGVNNKVRICLMCF).

It belongs to the arrestin family.

The protein is Arrestin domain-containing protein D (adcD) of Dictyostelium discoideum (Social amoeba).